A 35-amino-acid polypeptide reads, in one-letter code: Coatomer subunit alpha (35 aa).

Oligomeric complex that consists of at least the alpha, beta, beta', gamma, delta, epsilon and zeta subunits. Interacts with SCYL1. Interacts with JAGN1. Interacts with TMEM41B. Interacts with SVEP1. Probably interacts with PEX11A. In terms of tissue distribution, gastric, duodenal and jejunal mucosa. Circulates in the blood. Seems to be confined to specific endocrine cells.

Its function is as follows. Xenin stimulates exocrine pancreatic secretion. It inhibits pentagastrin-stimulated secretion of acid, to induce exocrine pancreatic secretion and to affect small and large intestinal motility. In the gut, xenin interacts with the neurotensin receptor. The sequence is that of Coatomer subunit alpha (COPA) from Canis lupus familiaris (Dog).